The chain runs to 665 residues: Pentatricopeptide repeat-containing protein At3g02490, mitochondrial (665 aa).

The transit peptide at 1–37 directs the protein to the mitochondrion; sequence MRYQWRSLLFRSYRSSPRPFLSHHSRFQVISNSTRSF. 8 PPR repeats span residues 280-314, 315-349, 352-388, 389-423, 424-458, 459-493, 495-530, and 536-570; these read DEKTYNAMARVLGKEKFLDRFQHMIEEIRSAGYEM, EMETYVRVSARFCQTKMIKEAVELFEFAMAGSISN, TPHCCSLLLKKIVTAKKLDMDLFTRTLKAYTGNGNVV, PDVMLQHVLKSLRSVDRFGQSNEVLKAMNEGGYVP, SGDLQSVIASGLSRKGKKDEANELVNFMEASGNHL, DDKAMASLVEGHCDAKDLEEASECFKKMIGKEGVS, AGYAFEKLVLAYCNSFQARDVYKLFSELVKQNQLKP, and KIMVRNLLMKKVARDGGFEEALSLLPMMRNHGFPP.

This sequence belongs to the PPR family. P subfamily.

The protein resides in the mitochondrion. This chain is Pentatricopeptide repeat-containing protein At3g02490, mitochondrial, found in Arabidopsis thaliana (Mouse-ear cress).